Consider the following 492-residue polypeptide: Spore germination protein GerLA (492 aa).

A run of 3 helical transmembrane segments spans residues 295–315 (IIAVLLPAMYVALVSYHQGLI), 384–404 (FLVIIIAVTAIATFSLPVYSI), and 410–430 (ILLFVFVLAATAFGLYGIILA).

It belongs to the GerABKA family.

The protein resides in the membrane. Its function is as follows. Contributes to the L-alanine germination response. The polypeptide is Spore germination protein GerLA (gerLA) (Bacillus cereus).